Reading from the N-terminus, the 102-residue chain is MVKIISSENFDSFIASGLVLVDFFAEWCGPCRMLTPILENLAAELPHVTIGKINIDENSKPAETYEVSSIPTLILFKDGNEVARVVGLKDKEFLTNLINKHA.

A Thioredoxin domain is found at 1 to 102; it reads MVKIISSENF…FLTNLINKHA (102 aa). Cysteine 28 and cysteine 31 are oxidised to a cystine.

This sequence belongs to the thioredoxin family.

Participates in various redox reactions through the reversible oxidation of its active center dithiol to a disulfide and catalyzes dithiol-disulfide exchange reactions. The sequence is that of Thioredoxin (trxA) from Chlamydia pneumoniae (Chlamydophila pneumoniae).